Reading from the N-terminus, the 337-residue chain is Tetraacyldisaccharide 4'-kinase (337 aa).

An ATP-binding site is contributed by threonine 52–threonine 59.

This sequence belongs to the LpxK family.

The catalysed reaction is a lipid A disaccharide + ATP = a lipid IVA + ADP + H(+). Its pathway is glycolipid biosynthesis; lipid IV(A) biosynthesis; lipid IV(A) from (3R)-3-hydroxytetradecanoyl-[acyl-carrier-protein] and UDP-N-acetyl-alpha-D-glucosamine: step 6/6. In terms of biological role, transfers the gamma-phosphate of ATP to the 4'-position of a tetraacyldisaccharide 1-phosphate intermediate (termed DS-1-P) to form tetraacyldisaccharide 1,4'-bis-phosphate (lipid IVA). This Methylobacterium nodulans (strain LMG 21967 / CNCM I-2342 / ORS 2060) protein is Tetraacyldisaccharide 4'-kinase.